Consider the following 1168-residue polypeptide: TBC1 domain family member 1 (1168 aa).

The residue at position 146 (S146) is a Phosphoserine. Residues 203-238 form a disordered region; the sequence is VSGSRGSESPRPNPPHAAPTGSQEPVRRPMRKSFSQ. Position 235 is a phosphoserine; by PKB/AKT1 (S235). Phosphoserine is present on S237. The PID domain maps to 246–404; it reads FRKELQDGGL…LHKLCERIEG (159 aa). S503 carries the phosphoserine modification. Residue T505 is modified to Phosphothreonine; by PKB/AKT1. Phosphoserine occurs at positions 507, 525, and 527. Residues 532 to 542 are compositionally biased toward low complexity; it reads SSLSSTLSNTS. Disordered regions lie at residues 532-551 and 564-587; these read SSLS…CEKE and GSSE…LSPQ. Phosphoserine is present on residues S565, S566, S570, S571, and S585. A Phosphothreonine modification is found at T596. Residue S614 is modified to Phosphoserine. The residue at position 627 (S627) is a Phosphoserine; by PKB/AKT1. 2 disordered regions span residues 628–658 and 678–717; these read VSTE…KTRR and SSSR…KRTS. Positions 632-645 are enriched in basic and acidic residues; sequence TPHERKDFESKANH. S695 and S941 each carry phosphoserine. The 195-residue stretch at 800 to 994 folds into the Rab-GAP TBC domain; sequence GVPRHHRGEI…RVFDMIFLQG (195 aa). Phosphotyrosine is present on Y952. Phosphothreonine is present on T1131. Over residues 1145–1159 the composition is skewed to basic and acidic residues; it reads ELRRRSAEPSDREPE. Residues 1145–1168 form a disordered region; it reads ELRRRSAEPSDREPECTQPEPTGD.

In terms of assembly, interacts with APPL2 (via BAR domain); interaction is dependent of TBC1D1 phosphorylation at Ser-235; interaction diminishes the phosphorylation of TBC1D1 at Thr-596, resulting in inhibition of SLC2A4/GLUT4 translocation and glucose uptake. Post-translationally, insulin-stimulated phosphorylation by AKT family kinases stimulates SLC2A4/GLUT4 translocation.

It is found in the nucleus. Functionally, may act as a GTPase-activating protein for Rab family protein(s). May play a role in the cell cycle and differentiation of various tissues. Involved in the trafficking and translocation of GLUT4-containing vesicles and insulin-stimulated glucose uptake into cells. The chain is TBC1 domain family member 1 (TBC1D1) from Homo sapiens (Human).